A 477-amino-acid chain; its full sequence is Bifunctional protein HldE (477 aa).

A ribokinase region spans residues Met-1–Thr-318. Position 179 is an N6-acetyllysine (Lys-179). ATP is bound at residue Asn-195–Glu-198. Residue Asp-264 is part of the active site. The tract at residues Met-344 to Gly-477 is cytidylyltransferase.

It in the N-terminal section; belongs to the carbohydrate kinase PfkB family. In the C-terminal section; belongs to the cytidylyltransferase family. In terms of assembly, homodimer.

It carries out the reaction D-glycero-beta-D-manno-heptose 7-phosphate + ATP = D-glycero-beta-D-manno-heptose 1,7-bisphosphate + ADP + H(+). The catalysed reaction is D-glycero-beta-D-manno-heptose 1-phosphate + ATP + H(+) = ADP-D-glycero-beta-D-manno-heptose + diphosphate. Its pathway is nucleotide-sugar biosynthesis; ADP-L-glycero-beta-D-manno-heptose biosynthesis; ADP-L-glycero-beta-D-manno-heptose from D-glycero-beta-D-manno-heptose 7-phosphate: step 1/4. It functions in the pathway nucleotide-sugar biosynthesis; ADP-L-glycero-beta-D-manno-heptose biosynthesis; ADP-L-glycero-beta-D-manno-heptose from D-glycero-beta-D-manno-heptose 7-phosphate: step 3/4. Functionally, catalyzes the phosphorylation of D-glycero-D-manno-heptose 7-phosphate at the C-1 position to selectively form D-glycero-beta-D-manno-heptose-1,7-bisphosphate. Its function is as follows. Catalyzes the ADP transfer from ATP to D-glycero-beta-D-manno-heptose 1-phosphate, yielding ADP-D-glycero-beta-D-manno-heptose. The polypeptide is Bifunctional protein HldE (Escherichia fergusonii (strain ATCC 35469 / DSM 13698 / CCUG 18766 / IAM 14443 / JCM 21226 / LMG 7866 / NBRC 102419 / NCTC 12128 / CDC 0568-73)).